Consider the following 345-residue polypeptide: MRVADFSFDLPDELIARYPMPNRTASRLLTLDGNSGAVADKQFTDILEMVNPGDLMVFNNTRVIPARVFGQKQTGGKLEILVERMLDDKRILAHVRSSKSPKPGTIICLDGGYEMTMLARHDTLFELELNSESTILEVLEEVGHMPLPPYIDRPDEDADKERYQTVYNQNPGAVAAPTAGLHFDDALLAALKEKGVNVAFVTLHVGAGTFQPVRVDSILDHKMHSEWAEVPQDVVDSIKATKAAGNRVIAVGTTSVRSLESAAKASEGELQAYSNDTDIFIYPGYEFQVVDAMVTNFHLPESTLIMLISAFAGFDEVKNAYQHAIAQKYRFFSYGDAMFVTKKAI.

It belongs to the QueA family. Monomer.

The protein localises to the cytoplasm. It carries out the reaction 7-aminomethyl-7-carbaguanosine(34) in tRNA + S-adenosyl-L-methionine = epoxyqueuosine(34) in tRNA + adenine + L-methionine + 2 H(+). The protein operates within tRNA modification; tRNA-queuosine biosynthesis. Its function is as follows. Transfers and isomerizes the ribose moiety from AdoMet to the 7-aminomethyl group of 7-deazaguanine (preQ1-tRNA) to give epoxyqueuosine (oQ-tRNA). This is S-adenosylmethionine:tRNA ribosyltransferase-isomerase from Shewanella loihica (strain ATCC BAA-1088 / PV-4).